The sequence spans 235 residues: MEKKELLYEGKAKKVYKTDKEDYYIIEYKDDATAFNGLKKGVIEEKGVVNNKVSSILFEFLEKRGIPTHYVKMLKDREMLVKKVTIFPLEVIIRNYAAGSICKRLGLQEGIKFKEPVLEFCYKNDELGDPMINEYHIRALELATRDEIDLIKERAFKVNEILSEYFLSKDIILVDFKLEFGKNQEGILLADEISPDTCRFWDKNTMEKLDKDRFRKDLGQVEEAYLEILRRVQQV.

The protein belongs to the SAICAR synthetase family.

It carries out the reaction 5-amino-1-(5-phospho-D-ribosyl)imidazole-4-carboxylate + L-aspartate + ATP = (2S)-2-[5-amino-1-(5-phospho-beta-D-ribosyl)imidazole-4-carboxamido]succinate + ADP + phosphate + 2 H(+). It participates in purine metabolism; IMP biosynthesis via de novo pathway; 5-amino-1-(5-phospho-D-ribosyl)imidazole-4-carboxamide from 5-amino-1-(5-phospho-D-ribosyl)imidazole-4-carboxylate: step 1/2. In Caldanaerobacter subterraneus subsp. tengcongensis (strain DSM 15242 / JCM 11007 / NBRC 100824 / MB4) (Thermoanaerobacter tengcongensis), this protein is Phosphoribosylaminoimidazole-succinocarboxamide synthase.